We begin with the raw amino-acid sequence, 1423 residues long: DNA-directed RNA polymerase subunit beta' (1423 aa).

Residues cysteine 71, cysteine 73, cysteine 86, and cysteine 89 each coordinate Zn(2+). 3 residues coordinate Mg(2+): aspartate 461, aspartate 463, and aspartate 465. Zn(2+)-binding residues include cysteine 815, cysteine 889, cysteine 896, and cysteine 899.

This sequence belongs to the RNA polymerase beta' chain family. The RNAP catalytic core consists of 2 alpha, 1 beta, 1 beta' and 1 omega subunit. When a sigma factor is associated with the core the holoenzyme is formed, which can initiate transcription. Requires Mg(2+) as cofactor. The cofactor is Zn(2+).

The enzyme catalyses RNA(n) + a ribonucleoside 5'-triphosphate = RNA(n+1) + diphosphate. In terms of biological role, DNA-dependent RNA polymerase catalyzes the transcription of DNA into RNA using the four ribonucleoside triphosphates as substrates. The protein is DNA-directed RNA polymerase subunit beta' of Actinobacillus pleuropneumoniae serotype 3 (strain JL03).